Reading from the N-terminus, the 669-residue chain is Acetyl-coenzyme A synthetase (669 aa).

CoA-binding positions include 211–214 (RGGK) and T329. ATP is bound by residues 404–406 (GEP), 428–433 (DTYWQT), D519, and R534. Residue S542 participates in CoA binding. R545 contacts ATP. R602 lines the CoA pocket.

It belongs to the ATP-dependent AMP-binding enzyme family.

It catalyses the reaction acetate + ATP + CoA = acetyl-CoA + AMP + diphosphate. It functions in the pathway ketone degradation; acetoin degradation. Its pathway is antibiotic biosynthesis; penicillin biosynthesis. This chain is Acetyl-coenzyme A synthetase (facA), found in Penicillium chrysogenum (Penicillium notatum).